Here is a 115-residue protein sequence, read N- to C-terminus: MNMFIVMMINIILSMSLIIIAFWLPQLNLYTEKANPYECGFDPMSSARLPFSMKFFLVAITFLLFDLEIALLLPLPWAIQIPNIKITMLTAFILVTVLALGLAYEWMQKGLEWTE.

The next 3 membrane-spanning stretches (helical) occupy residues 4 to 24 (FIVM…AFWL), 55 to 75 (FFLV…LLPL), and 86 to 106 (ITML…AYEW).

The protein belongs to the complex I subunit 3 family. Core subunit of respiratory chain NADH dehydrogenase (Complex I) which is composed of 45 different subunits. Interacts with TMEM186. Interacts with TMEM242.

It localises to the mitochondrion inner membrane. The enzyme catalyses a ubiquinone + NADH + 5 H(+)(in) = a ubiquinol + NAD(+) + 4 H(+)(out). Functionally, core subunit of the mitochondrial membrane respiratory chain NADH dehydrogenase (Complex I) which catalyzes electron transfer from NADH through the respiratory chain, using ubiquinone as an electron acceptor. Essential for the catalytic activity of complex I. This chain is NADH-ubiquinone oxidoreductase chain 3, found in Reithrodontomys fulvescens (Fulvous harvest mouse).